Reading from the N-terminus, the 164-residue chain is 6,7-dimethyl-8-ribityllumazine synthase 1 (164 aa).

Residues Phe27, 58-60 (SLE), and 87-89 (TII) each bind 5-amino-6-(D-ribitylamino)uracil. 92-93 (DT) lines the (2S)-2-hydroxy-3-oxobutyl phosphate pocket. His95 functions as the Proton donor in the catalytic mechanism. Residue Asn120 coordinates 5-amino-6-(D-ribitylamino)uracil. (2S)-2-hydroxy-3-oxobutyl phosphate is bound at residue Arg134.

The protein belongs to the DMRL synthase family. Homopentamer.

It carries out the reaction (2S)-2-hydroxy-3-oxobutyl phosphate + 5-amino-6-(D-ribitylamino)uracil = 6,7-dimethyl-8-(1-D-ribityl)lumazine + phosphate + 2 H2O + H(+). Its pathway is cofactor biosynthesis; riboflavin biosynthesis; riboflavin from 2-hydroxy-3-oxobutyl phosphate and 5-amino-6-(D-ribitylamino)uracil: step 1/2. In terms of biological role, catalyzes the formation of 6,7-dimethyl-8-ribityllumazine by condensation of 5-amino-6-(D-ribitylamino)uracil with 3,4-dihydroxy-2-butanone 4-phosphate. This is the penultimate step in the biosynthesis of riboflavin. The chain is 6,7-dimethyl-8-ribityllumazine synthase 1 (ribH1) from Mesorhizobium japonicum (strain LMG 29417 / CECT 9101 / MAFF 303099) (Mesorhizobium loti (strain MAFF 303099)).